The sequence spans 140 residues: Nucleoside diphosphate kinase (140 aa).

Positions 9, 57, 85, 91, 102, and 112 each coordinate ATP. His115 (pros-phosphohistidine intermediate) is an active-site residue.

It belongs to the NDK family. As to quaternary structure, homotetramer. It depends on Mg(2+) as a cofactor.

It localises to the cytoplasm. It catalyses the reaction a 2'-deoxyribonucleoside 5'-diphosphate + ATP = a 2'-deoxyribonucleoside 5'-triphosphate + ADP. The enzyme catalyses a ribonucleoside 5'-diphosphate + ATP = a ribonucleoside 5'-triphosphate + ADP. In terms of biological role, major role in the synthesis of nucleoside triphosphates other than ATP. The ATP gamma phosphate is transferred to the NDP beta phosphate via a ping-pong mechanism, using a phosphorylated active-site intermediate. The sequence is that of Nucleoside diphosphate kinase from Chlorobaculum parvum (strain DSM 263 / NCIMB 8327) (Chlorobium vibrioforme subsp. thiosulfatophilum).